The chain runs to 315 residues: Melanoma-associated antigen 9 (315 aa).

Residues 1-13 (MSLEQRSPHCKPD) are compositionally biased toward basic and acidic residues. Positions 1-67 (MSLEQRSPHC…PQSPQGGASS (67 aa)) are disordered. The segment covering 50-67 (SAAGSSSPPQSPQGGASS) has biased composition (low complexity). An MAGE domain is found at 108–307 (LKLKVAELVH…ICYPSLYEEV (200 aa)).

In terms of tissue distribution, expressed in many tumors of several types, such as melanoma, head and neck squamous cell carcinoma, lung carcinoma and breast carcinoma, but not in normal tissues except for testes and placenta.

Not known, though may play a role in embryonal development and tumor transformation or aspects of tumor progression. The chain is Melanoma-associated antigen 9 (MAGEA9) from Homo sapiens (Human).